The following is a 340-amino-acid chain: MTKITVVGAGSWGTALAMVLADNGHDVRIWGNRPELMDEINTKHENSRYLPGITLPSTIVAYSSLEEALVDVNTVLLVVPTKAYRDVLQEMKEIVTEPITWIHASKGIEPGTSKRISEVIEEEIPEHLIKDVVVLSGPSHAEEVGLRQATTVTSAAKRMEAAEEVQDLFMNSYFRVYTNPDIVGVELGGALKNIIALAAGITDGLGLGDNAKAALMTRGLTEIARLGRKMGGNPLTFAGLTGMGDLIVTCTSVHSRNWRAGNMLGKGHSLEEVLESMGMVVEGVRTTKAAHELAEKMEVEMPITAALYDVLFNGNNVKDAVGSLMGRVRKHEVEAIPDLL.

NADPH contacts are provided by Ser11, Trp12, Arg33, and Lys106. Residues Lys106, Gly137, and Ser139 each contribute to the sn-glycerol 3-phosphate site. Ala141 contacts NADPH. Sn-glycerol 3-phosphate-binding residues include Lys192, Asp245, Ser255, Arg256, and Asn257. Lys192 acts as the Proton acceptor in catalysis. Residue Arg256 participates in NADPH binding. 2 residues coordinate NADPH: Val280 and Glu282.

Belongs to the NAD-dependent glycerol-3-phosphate dehydrogenase family.

It localises to the cytoplasm. It carries out the reaction sn-glycerol 3-phosphate + NAD(+) = dihydroxyacetone phosphate + NADH + H(+). The enzyme catalyses sn-glycerol 3-phosphate + NADP(+) = dihydroxyacetone phosphate + NADPH + H(+). Its pathway is membrane lipid metabolism; glycerophospholipid metabolism. Functionally, catalyzes the reduction of the glycolytic intermediate dihydroxyacetone phosphate (DHAP) to sn-glycerol 3-phosphate (G3P), the key precursor for phospholipid synthesis. The polypeptide is Glycerol-3-phosphate dehydrogenase [NAD(P)+] (Bacillus cereus (strain B4264)).